Reading from the N-terminus, the 353-residue chain is Photosystem II D2 protein (353 aa).

T2 is modified (N-acetylthreonine). At T2 the chain carries Phosphothreonine. The chain crosses the membrane as a helical span at residues 41–61; sequence CAYFALGGWFTGTTFVTSWYT. H118 is a chlorophyll a binding site. Residues 125–141 form a helical membrane-spanning segment; the sequence is GFMLRQFELARSVQLRP. The pheophytin a site is built by Q130 and N143. A helical membrane pass occupies residues 153–166; it reads VFVSVFLIYPLGQS. Chlorophyll a is bound at residue H198. Residues 208–228 form a helical membrane-spanning segment; the sequence is AALLCAIHGATVENTLFEDGD. Positions 215 and 262 each coordinate a plastoquinone. H215 contacts Fe cation. H269 serves as a coordination point for Fe cation. Residues 279 to 295 form a helical membrane-spanning segment; it reads GSWMSAIGVVGLALNLR.

Belongs to the reaction center PufL/M/PsbA/D family. As to quaternary structure, PSII is composed of 1 copy each of membrane proteins PsbA, PsbB, PsbC, PsbD, PsbE, PsbF, PsbH, PsbI, PsbJ, PsbK, PsbL, PsbM, PsbT, PsbX, PsbY, PsbZ, Psb30/Ycf12, at least 3 peripheral proteins of the oxygen-evolving complex and a large number of cofactors. It forms dimeric complexes. The D1/D2 heterodimer binds P680, chlorophylls that are the primary electron donor of PSII, and subsequent electron acceptors. It shares a non-heme iron and each subunit binds pheophytin, quinone, additional chlorophylls, carotenoids and lipids. There is also a Cl(-1) ion associated with D1 and D2, which is required for oxygen evolution. The PSII complex binds additional chlorophylls, carotenoids and specific lipids. is required as a cofactor.

It localises to the plastid. It is found in the chloroplast thylakoid membrane. The enzyme catalyses 2 a plastoquinone + 4 hnu + 2 H2O = 2 a plastoquinol + O2. Photosystem II (PSII) is a light-driven water:plastoquinone oxidoreductase that uses light energy to abstract electrons from H(2)O, generating O(2) and a proton gradient subsequently used for ATP formation. It consists of a core antenna complex that captures photons, and an electron transfer chain that converts photonic excitation into a charge separation. The D1/D2 (PsbA/PsbD) reaction center heterodimer binds P680, the primary electron donor of PSII as well as several subsequent electron acceptors. D2 is needed for assembly of a stable PSII complex. This Pinus koraiensis (Korean pine) protein is Photosystem II D2 protein.